Here is a 129-residue protein sequence, read N- to C-terminus: Large ribosomal subunit protein uL22 (129 aa).

This sequence belongs to the universal ribosomal protein uL22 family. In terms of assembly, part of the 50S ribosomal subunit.

This protein binds specifically to 23S rRNA; its binding is stimulated by other ribosomal proteins, e.g. L4, L17, and L20. It is important during the early stages of 50S assembly. It makes multiple contacts with different domains of the 23S rRNA in the assembled 50S subunit and ribosome. Its function is as follows. The globular domain of the protein is located near the polypeptide exit tunnel on the outside of the subunit, while an extended beta-hairpin is found that lines the wall of the exit tunnel in the center of the 70S ribosome. This Metamycoplasma hominis (strain ATCC 23114 / DSM 25592 / NBRC 14850 / NCTC 10111 / PG21) (Mycoplasma hominis) protein is Large ribosomal subunit protein uL22.